The following is a 335-amino-acid chain: Stearoyl-CoA desaturase 5 (335 aa).

Over 1-54 the chain is Cytoplasmic; the sequence is MPGPAVDAEKVPFRSAKEEIRAGVGVEGSEGGGGGGGRERPGARGHRQDIVWRN. A disordered region spans residues 24-44; that stretch reads VGVEGSEGGGGGGGRERPGAR. Residues 25-36 are compositionally biased toward gly residues; sequence GVEGSEGGGGGG. Asn-54 is a substrate binding site. The helical transmembrane segment at 55–75 threads the bilayer; it reads VFLMSLLHLAAVYSLVLIPKA. Topologically, residues 76–77 are lumenal; that stretch reads QP. Residues 78–98 form a helical membrane-spanning segment; it reads LTLLWAYFCFLLTALGVTAGA. Residues His-99 and His-104 each contribute to the Fe cation site. Residues 99–104 carry the Histidine box-1 motif; sequence HRLWSH. The Cytoplasmic portion of the chain corresponds to 99 to 198; the sequence is HRLWSHRSYK…VVRFQRKYYK (100 aa). Residues Asn-127, Arg-134, and Asp-135 each contribute to the substrate site. The Fe cation site is built by His-136, His-139, and His-140. Residues 136–140 carry the Histidine box-2 motif; it reads HRVHH. Positions 167 and 168 each coordinate substrate. The helical transmembrane segment at 199–219 threads the bilayer; the sequence is ITVVLMCFVVPTLVPWYIWGE. Residues 220–227 lie on the Lumenal side of the membrane; it reads SLWNSYFL. The chain crosses the membrane as a helical span at residues 228-247; sequence ASILRYTISLNVTWLVNSVA. Residue Trp-241 coordinates substrate. Positions 248, 277, 280, and 281 each coordinate Fe cation. At 248 to 335 the chain is on the cytoplasmic side; it reads HMYGNRPYDK…RKARTGDGSA (88 aa). Positions 277 to 281 match the Histidine box-3 motif; that stretch reads HNYHH.

The protein belongs to the fatty acid desaturase type 1 family. May self-associate and form homodimers. The cofactor is Fe(2+). Detected in brain.

The protein localises to the endoplasmic reticulum membrane. The enzyme catalyses octadecanoyl-CoA + 2 Fe(II)-[cytochrome b5] + O2 + 2 H(+) = (9Z)-octadecenoyl-CoA + 2 Fe(III)-[cytochrome b5] + 2 H2O. It catalyses the reaction hexadecanoyl-CoA + 2 Fe(II)-[cytochrome b5] + O2 + 2 H(+) = (9Z)-hexadecenoyl-CoA + 2 Fe(III)-[cytochrome b5] + 2 H2O. Functionally, stearoyl-CoA desaturase that utilizes O(2) and electrons from reduced cytochrome b5 to introduce the first double bond into saturated fatty acyl-CoA substrates. Catalyzes the insertion of a cis double bond at the delta-9 position into fatty acyl-CoA substrates including palmitoyl-CoA and stearoyl-CoA. Gives rise to a mixture of 16:1 and 18:1 unsaturated fatty acids. Involved in neuronal cell proliferation and differentiation through down-regulation of EGFR/AKT/MAPK and Wnt signaling pathways. In Bos taurus (Bovine), this protein is Stearoyl-CoA desaturase 5 (SCD5).